Reading from the N-terminus, the 343-residue chain is Tetraacyldisaccharide 4'-kinase (343 aa).

Position 51–58 (51–58) interacts with ATP; the sequence is HGGGAGKT.

It belongs to the LpxK family.

The enzyme catalyses a lipid A disaccharide + ATP = a lipid IVA + ADP + H(+). The protein operates within glycolipid biosynthesis; lipid IV(A) biosynthesis; lipid IV(A) from (3R)-3-hydroxytetradecanoyl-[acyl-carrier-protein] and UDP-N-acetyl-alpha-D-glucosamine: step 6/6. In terms of biological role, transfers the gamma-phosphate of ATP to the 4'-position of a tetraacyldisaccharide 1-phosphate intermediate (termed DS-1-P) to form tetraacyldisaccharide 1,4'-bis-phosphate (lipid IVA). The polypeptide is Tetraacyldisaccharide 4'-kinase (Rhodopseudomonas palustris (strain BisB18)).